A 206-amino-acid chain; its full sequence is MTPIQEQLIALGGVFQAAVLVDRIAKTGQVSEAALSCMLGSLLVVDPKDTLDVYGGDDLNLHEGYRAMASALERDPATLQREPLRYALSMLGLERQLAKRDDLLEIIGRRIPVIQSQVEHFGIAHENVIAATGALYEDTLSTLRQRIQVQGDMRNLQQPNNASKIRAILLAGIRSARLWRQVDGHRWQLVFSRRKLLKELYPLLHG.

This sequence belongs to the HflD family.

It localises to the cytoplasm. It is found in the cell inner membrane. The chain is High frequency lysogenization protein HflD homolog from Pseudomonas savastanoi pv. phaseolicola (strain 1448A / Race 6) (Pseudomonas syringae pv. phaseolicola (strain 1448A / Race 6)).